Reading from the N-terminus, the 451-residue chain is Phosphoglucosamine mutase (451 aa).

Ser103 serves as the catalytic Phosphoserine intermediate. Positions 103, 243, 245, and 247 each coordinate Mg(2+). Ser103 carries the post-translational modification Phosphoserine.

This sequence belongs to the phosphohexose mutase family. Mg(2+) is required as a cofactor. In terms of processing, activated by phosphorylation.

The catalysed reaction is alpha-D-glucosamine 1-phosphate = D-glucosamine 6-phosphate. Catalyzes the conversion of glucosamine-6-phosphate to glucosamine-1-phosphate. The sequence is that of Phosphoglucosamine mutase from Lactiplantibacillus plantarum (strain ATCC BAA-793 / NCIMB 8826 / WCFS1) (Lactobacillus plantarum).